The following is a 359-amino-acid chain: Probable tyrosine-protein phosphatase pir-2 (359 aa).

The Tyrosine-protein phosphatase domain occupies 16–191 (QPVGNVIPRT…AKDKRDKQVD (176 aa)). C131 functions as the Phosphocysteine intermediate in the catalytic mechanism. Positions 184 to 199 (DKRDKQVDSDSDSSER) are enriched in basic and acidic residues. Disordered regions lie at residues 184 to 211 (DKRD…KHRE), 234 to 259 (SVSG…PHHW), and 274 to 328 (PVAN…RNRM). Positions 200–210 (QRKKKNKRKHR) are enriched in basic residues. Over residues 234 to 246 (SVSGTDYQNSPNG) the composition is skewed to polar residues. Over residues 290–309 (PQEEEEFEEDFEEIEEETET) the composition is skewed to acidic residues. Residues 319–328 (SKRRARRNRM) show a composition bias toward basic residues.

It belongs to the protein-tyrosine phosphatase family. Non-receptor class CDC14 subfamily.

The enzyme catalyses O-phospho-L-tyrosyl-[protein] + H2O = L-tyrosyl-[protein] + phosphate. The polypeptide is Probable tyrosine-protein phosphatase pir-2 (Caenorhabditis elegans).